The following is a 259-amino-acid chain: Thiazole synthase (259 aa).

The active-site Schiff-base intermediate with DXP is the Lys95. 1-deoxy-D-xylulose 5-phosphate is bound by residues Gly156, 182–183, and 204–205; these read AG and NT.

It belongs to the ThiG family. In terms of assembly, homotetramer. Forms heterodimers with either ThiH or ThiS.

It is found in the cytoplasm. The catalysed reaction is [ThiS sulfur-carrier protein]-C-terminal-Gly-aminoethanethioate + 2-iminoacetate + 1-deoxy-D-xylulose 5-phosphate = [ThiS sulfur-carrier protein]-C-terminal Gly-Gly + 2-[(2R,5Z)-2-carboxy-4-methylthiazol-5(2H)-ylidene]ethyl phosphate + 2 H2O + H(+). It participates in cofactor biosynthesis; thiamine diphosphate biosynthesis. Functionally, catalyzes the rearrangement of 1-deoxy-D-xylulose 5-phosphate (DXP) to produce the thiazole phosphate moiety of thiamine. Sulfur is provided by the thiocarboxylate moiety of the carrier protein ThiS. In vitro, sulfur can be provided by H(2)S. The protein is Thiazole synthase of Baumannia cicadellinicola subsp. Homalodisca coagulata.